Here is a 206-residue protein sequence, read N- to C-terminus: Large ribosomal subunit protein uL4 (206 aa).

The tract at residues 63-96 is disordered; sequence MYKQKGTGRARHHSARAPQFRGGGKAHGPVVRSH. Over residues 64 to 77 the composition is skewed to basic residues; that stretch reads YKQKGTGRARHHSA.

This sequence belongs to the universal ribosomal protein uL4 family. In terms of assembly, part of the 50S ribosomal subunit.

Functionally, one of the primary rRNA binding proteins, this protein initially binds near the 5'-end of the 23S rRNA. It is important during the early stages of 50S assembly. It makes multiple contacts with different domains of the 23S rRNA in the assembled 50S subunit and ribosome. Forms part of the polypeptide exit tunnel. The protein is Large ribosomal subunit protein uL4 of Allorhizobium ampelinum (strain ATCC BAA-846 / DSM 112012 / S4) (Agrobacterium vitis (strain S4)).